The primary structure comprises 591 residues: Vomeromodulin (591 aa).

Residues 1-18 (MWVLQALAIMLSIQAGTL) form the signal peptide. Residues 151-172 (NEGNGDSSKPSSGSKATGGLGQ) are disordered. N-linked (GlcNAc...) asparagine glycans are attached at residues Asn-421 and Asn-516.

N-glycosylated. The N-glycans consist mainly of complex sialylated and fucosylated biantennary structures. In terms of tissue distribution, expressed in lung. Not detected in other tissues tested (at protein level).

The protein resides in the secreted. The polypeptide is Vomeromodulin (Mus musculus (Mouse)).